The chain runs to 240 residues: MNTNKYLAEMIGTFWLTFAGCGSAVIAAGFPQVGIGLVGVSLAFGLSVVTMAYAIGHISGCHLNPAVTLGLAAGGRFPVKQIAPYIIAQVLGAIAAAALLYLIASGAAGFDLAKGFASNGYGAHSPGQYNLVACFVMEVVMTMMFLFVIMGSTHGKAPAGFAPLAIGLALVMIHLVSIPVTNTSVNPARSTGPALFVGGWAIGQLWLFWVAPLLGGVLGGVIYRVLSPEPTGVVEGVKAR.

2 helical membrane passes run 10 to 30 (MIGT…AAGF) and 35 to 55 (IGLV…AYAI). Residues 64–66 (NPA) carry the NPA 1 motif. A run of 3 helical transmembrane segments spans residues 90–110 (VLGA…AAGF), 131–151 (LVAC…VIMG), and 160–180 (GFAP…SIPV). The NPA 2 motif lies at 186-188 (NPA). Residues 202-222 (IGQLWLFWVAPLLGGVLGGVI) form a helical membrane-spanning segment.

This sequence belongs to the MIP/aquaporin (TC 1.A.8) family. In terms of assembly, homotetramer.

It is found in the cell inner membrane. It carries out the reaction H2O(in) = H2O(out). Its function is as follows. Channel that permits osmotically driven movement of water in both directions. It is involved in the osmoregulation and in the maintenance of cell turgor during volume expansion in rapidly growing cells. It mediates rapid entry or exit of water in response to abrupt changes in osmolarity. The chain is Aquaporin Z from Rhodopseudomonas palustris (strain ATCC BAA-98 / CGA009).